Here is a 421-residue protein sequence, read N- to C-terminus: Mitochondrial tRNA-specific 2-thiouridylase 1 (421 aa).

ATP-binding positions include 10–17 (ALSGGVDS) and Met36. The interaction with target base in tRNA stretch occupies residues 96-98 (NPD). Cys101 serves as the catalytic Nucleophile. An intrachain disulfide couples Cys101 to Cys222. Residue Gly126 coordinates ATP. The tract at residues 171-173 (KDQ) is interaction with tRNA. The active-site Cysteine persulfide intermediate is the Cys222. An interaction with tRNA region spans residues 334 to 335 (RH). Residues 395 to 421 (KGQRRAGMATESPSDSPEDGPGLSPLL) are disordered.

It belongs to the MnmA/TRMU family. Ubiquitous. Abundantly expressed in tissues with high metabolic rates including heart, liver, kidney, and brain.

It is found in the mitochondrion. The catalysed reaction is 5-taurinomethyluridine(34) in tRNA + S-sulfanyl-L-cysteinyl-[protein] + AH2 + ATP = 5-taurinomethyl-2-thiouridine(34) in tRNA + L-cysteinyl-[protein] + A + AMP + diphosphate + H(+). Functionally, catalyzes the 2-thiolation of uridine at the wobble position (U34) of mitochondrial tRNA(Lys), tRNA(Glu) and tRNA(Gln). Required for the formation of 5-taurinomethyl-2-thiouridine (tm5s2U) of mitochondrial tRNA(Lys), tRNA(Glu), and tRNA(Gln) at the wobble position. ATP is required to activate the C2 atom of the wobble base. In Homo sapiens (Human), this protein is Mitochondrial tRNA-specific 2-thiouridylase 1 (TRMU).